Here is a 563-residue protein sequence, read N- to C-terminus: Serine/threonine-protein kinase WNK8 (563 aa).

Residues 29–286 (IRYDDVLGRG…ALELSKDPFL (258 aa)) enclose the Protein kinase domain. ATP contacts are provided by residues 109–112 (TELF) and Lys159. The active-site Proton acceptor is Asp176. Polar residues predominate over residues 426 to 436 (TSSHHNQNSPR). Residues 426 to 459 (TSSHHNQNSPRLTHEDHEAANQQTVNSKDEEAAG) form a disordered region. Ser509 is modified (phosphoserine).

This sequence belongs to the protein kinase superfamily. Ser/Thr protein kinase family. WNK subfamily. In terms of assembly, interacts with RGS1 and GB1, but not with GPA1. The association with RGS1 at the plasma membrane is triggered by induction of glucose. Binds to EDM2 in nucleus. In terms of processing, autophosphorylated.

The protein localises to the nucleus. It catalyses the reaction L-seryl-[protein] + ATP = O-phospho-L-seryl-[protein] + ADP + H(+). It carries out the reaction L-threonyl-[protein] + ATP = O-phospho-L-threonyl-[protein] + ADP + H(+). Functionally, regulates flowering time by modulating the photoperiod pathway. Phosphorylates the vacuolar ATPase subunit C (VATC) and RGS1. Regulates EDM2 that, in turn, modulates development processes. This chain is Serine/threonine-protein kinase WNK8 (WNK8), found in Arabidopsis thaliana (Mouse-ear cress).